A 79-amino-acid polypeptide reads, in one-letter code: Acyl carrier protein (79 aa).

Residues 2-77 form the Carrier domain; the sequence is SDIEARVKKI…LAIDYAKNNV (76 aa). At Ser-37 the chain carries O-(pantetheine 4'-phosphoryl)serine.

It belongs to the acyl carrier protein (ACP) family. In terms of processing, 4'-phosphopantetheine is transferred from CoA to a specific serine of apo-ACP by AcpS. This modification is essential for activity because fatty acids are bound in thioester linkage to the sulfhydryl of the prosthetic group.

It localises to the cytoplasm. The protein operates within lipid metabolism; fatty acid biosynthesis. Functionally, carrier of the growing fatty acid chain in fatty acid biosynthesis. The protein is Acyl carrier protein of Leptothrix cholodnii (strain ATCC 51168 / LMG 8142 / SP-6) (Leptothrix discophora (strain SP-6)).